Here is a 92-residue protein sequence, read N- to C-terminus: PqqA binding protein (92 aa).

This sequence belongs to the PqqD family. As to quaternary structure, monomer. Interacts with PqqE.

Its pathway is cofactor biosynthesis; pyrroloquinoline quinone biosynthesis. Its function is as follows. Functions as a PqqA binding protein and presents PqqA to PqqE, in the pyrroloquinoline quinone (PQQ) biosynthetic pathway. The polypeptide is PqqA binding protein (Klebsiella pneumoniae (strain 342)).